The following is a 297-amino-acid chain: 1D-myo-inositol 2-acetamido-2-deoxy-alpha-D-glucopyranoside deacetylase (297 aa).

3 residues coordinate Zn(2+): His-14, Asp-17, and His-149.

Belongs to the MshB deacetylase family. Zn(2+) serves as cofactor.

It catalyses the reaction 1D-myo-inositol 2-acetamido-2-deoxy-alpha-D-glucopyranoside + H2O = 1D-myo-inositol 2-amino-2-deoxy-alpha-D-glucopyranoside + acetate. Functionally, catalyzes the deacetylation of 1D-myo-inositol 2-acetamido-2-deoxy-alpha-D-glucopyranoside (GlcNAc-Ins) in the mycothiol biosynthesis pathway. This chain is 1D-myo-inositol 2-acetamido-2-deoxy-alpha-D-glucopyranoside deacetylase, found in Thermomonospora curvata (strain ATCC 19995 / DSM 43183 / JCM 3096 / KCTC 9072 / NBRC 15933 / NCIMB 10081 / Henssen B9).